A 186-amino-acid polypeptide reads, in one-letter code: Myosin light chain 1, skeletal muscle isoform (186 aa).

Residue Met1 is modified to Blocked amino end (Met). The disordered stretch occupies residues 1 to 26; the sequence is MPKAPAKKAEPAPAPAPAPEPAPAPA. Residues 12–26 show a composition bias toward pro residues; the sequence is APAPAPAPEPAPAPA. EF-hand domains follow at residues 42 to 77 and 119 to 154; these read DQIEDYREAFGLFDRVGDNKVAYNQIADIMRALGQN and AGFEDYVEGLRVFDKEGNGTVMGAELRIVLSTLGEK.

Myosin is a hexamer of 2 heavy chains and 4 light chains.

The chain is Myosin light chain 1, skeletal muscle isoform from Chelon ramada (Thin-lipped grey mullet).